A 655-amino-acid polypeptide reads, in one-letter code: RalA-binding protein 1 (655 aa).

The tract at residues 1 to 158 is disordered; sequence MTECFLPPTS…KKSKDLTAAD (158 aa). Thr-2 carries the post-translational modification N-acetylthreonine. Residues 24–33 are compositionally biased toward polar residues; it reads LTRTPSSEEI. 3 positions are modified to phosphoserine: Ser-29, Ser-30, and Ser-34. Thr-44 carries the post-translational modification Phosphothreonine. Ser-48 and Ser-62 each carry phosphoserine. A compositionally biased stretch (basic and acidic residues) spans 52–68; that stretch reads DILHEPPDVVSDDEKDH. 69-74 contacts ATP; it reads GKKKGK. A compositionally biased stretch (basic residues) spans 69-79; sequence GKKKGKFKKKE. Phosphoserine occurs at positions 92 and 93. Positions 102–118 are enriched in basic residues; it reads KMKRSKGIHVFKKPSFS. The nuclear localization signal stretch occupies residues 102–119; sequence KMKRSKGIHVFKKPSFSK. Over residues 119-155 the composition is skewed to basic and acidic residues; the sequence is KKKEKDFKIKEKPKEEKHKEEKHKEEKHKEKKSKDLT. Positions 154–219 are mediates association with membranes and could form transmembrane domains; that stretch reads LTAADVVKQW…PAVFRECIDY (66 aa). A Rho-GAP domain is found at 192–380; sequence IPLADAVERT…VVLKQVMKPL (189 aa). Positions 403 to 499 are mediates interaction with RALA and RALB; it reads RRQEFLLNCL…LTEQEELLAM (97 aa). Residue 418–425 participates in ATP binding; that stretch reads GGIKDLSK. 2 positions are modified to phosphoserine: Ser-461 and Ser-463. Residues 500–655 are mediates interaction with REPS1 and REPS2; the sequence is EQFLRRQIAS…PSRDRKETSI (156 aa). Disordered stretches follow at residues 525 to 551 and 601 to 655; these read QSRQ…DEEE and AEQQ…ETSI. Residues 536 to 551 show a composition bias toward acidic residues; that stretch reads EEYSSESESESEDEEE. Residues 624–655 show a composition bias toward basic and acidic residues; that stretch reads GVLEPKAAKEQPKAGKEPAKPSPSRDRKETSI. Residue Ser-645 is modified to Phosphoserine.

Interacts with the GTP-bound form of RALA (via effector domain); during mitosis, recruits RALBP1 to the mitochondrion where it promotes DNM1L phosphorylation and mitochondrial fission. Interacts with DNM1L; mediates its mitotic kinase cyclin B-CDK1-mediated phosphorylation during mitosis to promote mitochondrial fission. Interacts with the mitotic kinase cyclin B-CDK1 during mitosis. Interacts with the GTP-bound form of RALB (via effector domain). Interacts with REPS1; the interaction is direct and does not affect RALA-binding nor GTPase activator activity of RALBP1. Interacts with REPS2; the interaction is direct and does not affect RALA-binding nor GTPase activator activity of RALBP1. Interacts with EPN1, NUMB and TFAP2A during interphase and mitosis. Interacts with AP2M1; as part of the AP2 complex. Interacts with CDC42. Interacts with RAC1. Tyrosine-phosphorylated upon stimulation of cells with EGF. Post-translationally, may undergo proteolytic cleavage to give peptides which reassemble to form a transporter complex. In terms of tissue distribution, expressed ubiquitously but at low levels. Shows a strong expression in the erythrocytes.

It is found in the cell membrane. The protein localises to the cytoplasm. The protein resides in the cytosol. Its subcellular location is the cytoskeleton. It localises to the spindle pole. It is found in the nucleus. The protein localises to the mitochondrion. It catalyses the reaction an S-substituted glutathione(in) + ATP + H2O = an S-substituted glutathione(out) + ADP + phosphate + H(+). The catalysed reaction is ATP + H2O + xenobioticSide 1 = ADP + phosphate + xenobioticSide 2.. The enzyme catalyses leukotriene C4(in) + ATP + H2O = leukotriene C4(out) + ADP + phosphate + H(+). Functionally, multifunctional protein that functions as a downstream effector of RALA and RALB. As a GTPase-activating protein/GAP can inactivate CDC42 and RAC1 by stimulating their GTPase activity. As part of the Ral signaling pathway, may also regulate ligand-dependent EGF and insulin receptors-mediated endocytosis. During mitosis, may act as a scaffold protein in the phosphorylation of EPSIN/EPN1 by the mitotic kinase cyclin B-CDK1, preventing endocytosis during that phase of the cell cycle. During mitosis, also controls mitochondrial fission as an effector of RALA. Recruited to mitochondrion by RALA, acts as a scaffold to foster the mitotic kinase cyclin B-CDK1-mediated phosphorylation and activation of DNM1L. Could also function as a primary ATP-dependent active transporter for glutathione conjugates of electrophiles. May also actively catalyze the efflux of a wide range of substrates including xenobiotics like doxorubicin (DOX) contributing to cell multidrug resistance. The protein is RalA-binding protein 1 of Homo sapiens (Human).